A 1366-amino-acid polypeptide reads, in one-letter code: Protein strawberry notch homolog 2 (1366 aa).

Disordered regions lie at residues 1–24 (MLAV…GSLL), 174–217 (QEQS…KQHP), 614–640 (STKR…KAPR), and 1324–1366 (HAGP…QAPL). Pro residues predominate over residues 15 to 24 (HEPPPAGSLL). A compositionally biased stretch (acidic residues) spans 182–194 (PEEEDEAEEEEAE). The span at 614 to 637 (STKRKRDRGAGSKRKRRPRGRGAK) shows a compositional bias: basic residues. Residues 1333 to 1347 (LGEGAGAGGAAGGGP) are compositionally biased toward gly residues.

The protein belongs to the SBNO family. Interacts with TAL1; this interaction inhibits TAL1 occupancy of the DCSTAMP promoter, leading to the activation of the DCSTAMP promoter by the transcription factor MITF. As to expression, detected in macrophages. IL10 regulates expression in a STAT3-dependent way.

In terms of biological role, acts as a transcriptional coregulator, that can have both coactivator and corepressor functions. Inhibits the DCSTAMP-repressive activity of TAL1, hence enhancing the access of the transcription factor MITF to the DC-STAMP promoter in osteoclast. Plays a role in bone homeostasis; required as a positive regulator in TNFSF11//RANKL-mediated osteoclast fusion via a DCSTAMP-dependent pathway. May also be required in the regulation of osteoblast differentiation. Involved in the transcriptional corepression of NF-kappaB in macrophages. Plays a role as a regulator in the pro-inflammatory cascade. This chain is Protein strawberry notch homolog 2 (SBNO2), found in Homo sapiens (Human).